The chain runs to 276 residues: D-apionate oxidoisomerase (276 aa).

Residues 12 to 14 (GKM), Glu33, and Asp69 each bind NAD(+). The Zn(2+) site is built by His114 and Glu184.

Belongs to the ApnO family. Zn(2+) is required as a cofactor.

The catalysed reaction is D-apionate + NAD(+) = 3-oxoisoapionate + NADH + H(+). It functions in the pathway carbohydrate metabolism. Functionally, involved in catabolism of D-apiose. Catalyzes the conversion of D-apionate to 3-oxo-isoapionate. In Cupriavidus necator (strain ATCC 43291 / DSM 13513 / CCUG 52238 / LMG 8453 / N-1) (Ralstonia eutropha), this protein is D-apionate oxidoisomerase.